A 353-amino-acid polypeptide reads, in one-letter code: Photosystem II protein D1 (353 aa).

Thr-2 carries the post-translational modification N-acetylthreonine. A Phosphothreonine modification is found at Thr-2. The next 3 helical transmembrane spans lie at 29-46, 118-133, and 142-156; these read YIGWFGVLMIPTLLTATS, HFLLGVACYMGREWEL, and WIAVAYSAPVAAATA. His-118 is a binding site for chlorophyll a. Tyr-126 lines the pheophytin a pocket. Asp-170 and Glu-189 together coordinate [CaMn4O5] cluster. The helical transmembrane segment at 197 to 218 threads the bilayer; that stretch reads FHMLGVAGVFGGSLFSAMHGSL. Chlorophyll a is bound at residue His-198. Residues His-215 and 264–265 contribute to the a quinone site; that span reads SF. His-215 contributes to the Fe cation binding site. His-272 provides a ligand contact to Fe cation. The chain crosses the membrane as a helical span at residues 274–288; that stretch reads FLAAWPVVGIWFTAL. [CaMn4O5] cluster is bound by residues His-332, Glu-333, Asp-342, and Ala-344. Residues 345–353 constitute a propeptide that is removed on maturation; it reads ALEVPSING.

It belongs to the reaction center PufL/M/PsbA/D family. As to quaternary structure, PSII is composed of 1 copy each of membrane proteins PsbA, PsbB, PsbC, PsbD, PsbE, PsbF, PsbH, PsbI, PsbJ, PsbK, PsbL, PsbM, PsbT, PsbX, PsbY, PsbZ, Psb30/Ycf12, at least 3 peripheral proteins of the oxygen-evolving complex and a large number of cofactors. It forms dimeric complexes. The D1/D2 heterodimer binds P680, chlorophylls that are the primary electron donor of PSII, and subsequent electron acceptors. It shares a non-heme iron and each subunit binds pheophytin, quinone, additional chlorophylls, carotenoids and lipids. D1 provides most of the ligands for the Mn4-Ca-O5 cluster of the oxygen-evolving complex (OEC). There is also a Cl(-1) ion associated with D1 and D2, which is required for oxygen evolution. The PSII complex binds additional chlorophylls, carotenoids and specific lipids. serves as cofactor. Tyr-161 forms a radical intermediate that is referred to as redox-active TyrZ, YZ or Y-Z. In terms of processing, C-terminally processed by CTPA; processing is essential to allow assembly of the oxygen-evolving complex and thus photosynthetic growth.

It localises to the plastid. It is found in the chloroplast thylakoid membrane. The enzyme catalyses 2 a plastoquinone + 4 hnu + 2 H2O = 2 a plastoquinol + O2. Its function is as follows. Photosystem II (PSII) is a light-driven water:plastoquinone oxidoreductase that uses light energy to abstract electrons from H(2)O, generating O(2) and a proton gradient subsequently used for ATP formation. It consists of a core antenna complex that captures photons, and an electron transfer chain that converts photonic excitation into a charge separation. The D1/D2 (PsbA/PsbD) reaction center heterodimer binds P680, the primary electron donor of PSII as well as several subsequent electron acceptors. The protein is Photosystem II protein D1 of Agrostis stolonifera (Creeping bentgrass).